The primary structure comprises 362 residues: 3-dehydroquinate synthase (362 aa).

NAD(+)-binding positions include 72–77, 106–110, 130–131, lysine 142, and lysine 151; these read SGEEAK, GVTGD, and TT. Residues glutamate 184, histidine 246, and histidine 263 each coordinate Zn(2+).

This sequence belongs to the sugar phosphate cyclases superfamily. Dehydroquinate synthase family. The cofactor is Co(2+). Zn(2+) is required as a cofactor. Requires NAD(+) as cofactor.

The protein localises to the cytoplasm. It catalyses the reaction 7-phospho-2-dehydro-3-deoxy-D-arabino-heptonate = 3-dehydroquinate + phosphate. It participates in metabolic intermediate biosynthesis; chorismate biosynthesis; chorismate from D-erythrose 4-phosphate and phosphoenolpyruvate: step 2/7. In terms of biological role, catalyzes the conversion of 3-deoxy-D-arabino-heptulosonate 7-phosphate (DAHP) to dehydroquinate (DHQ). The polypeptide is 3-dehydroquinate synthase (Bacillus velezensis (strain DSM 23117 / BGSC 10A6 / LMG 26770 / FZB42) (Bacillus amyloliquefaciens subsp. plantarum)).